Reading from the N-terminus, the 560-residue chain is MFS siderochrome iron transporter 1 (560 aa).

A glycan (N-linked (GlcNAc...) asparagine) is linked at N29. 11 consecutive transmembrane segments (helical) span residues 53-73, 90-110, 115-135, 146-166, 177-194, 211-231, 264-284, 291-311, 331-351, 354-374, and 379-399; these read LWLTFALLYLVAFVDMLLVSV, LLASVSIVATILSGCSTLTLA, VWGRIEGFLFMLLVVVVALIM, VAAHTLYWTGHIGMIYCVDVM, MIMFSINNTPTIASTFAG, FGAFAIMLVGVSLPVIVIMLF, VVGIVLITASFALILLPFSIV, WATGYIIAMEVVGVVCGAIFL, PTIIGSCLLYGVMFASALLTI, AGYVLNSFSLSSAILAPGIGL, and FKWAAYAGIPFMLLGTALLIP. The N-linked (GlcNAc...) asparagine glycan is linked to N404. The next 3 membrane-spanning stretches (helical) occupy residues 407 to 427, 441 to 461, and 522 to 542; these read IGAVTITQVLVGIGTSFFSVC, VAVVLAIWGMFGSIGASVGLA, and VIAGVCMMPLVMASIVIWRNV.

The protein belongs to the major facilitator superfamily.

The protein localises to the membrane. Major facilitator transporter involved in siderophore transport. This is MFS siderochrome iron transporter 1 from Ajellomyces capsulatus (Darling's disease fungus).